Reading from the N-terminus, the 744-residue chain is Protein zyg-11 homolog B (744 aa).

LRR repeat units lie at residues 185 to 208, 216 to 236, and 237 to 261; these read LPRLESLDISNTSITDITALLACK, MHHLKCLKMTTTQILDVVREL, and KHLNHLDISDDKQFTSDIALRLLEQ.

This sequence belongs to the zyg-11 family. (Microbial infection) Interacts with SARS-COV-2 protein ORF10. As to quaternary structure, interacts with ELOC/Elongin C. Part of an E3 ubiquitin ligase complex including ZYG11B, CUL2 and Elongin BC. Post-translationally, (Microbial infection) Ubiquitinated; leading to proteasomal degradation in the presence of herpes simplex virus 1/HHV-1.

Its subcellular location is the cytoplasm. Its function is as follows. Serves as substrate adapter subunit in the E3 ubiquitin ligase complex ZYG11B-CUL2-Elongin BC. Acts to target substrates bearing N-terminal degrons for proteasomal degradation with the first four residues of substrates being the key recognition elements. Prefers Nt-Gly but also has the capacity to recognize Nt-Ser, -Ala and -Cys. Involved in the clearance of proteolytic fragments generated by caspase cleavage during apoptosis since N-terminal glycine degrons are strongly enriched at caspase cleavage sites. Also important in the quality control of protein N-myristoylation in which N-terminal glycine degrons are conditionally exposed after a failure of N-myristoylation. In addition, plays a role in the amplification of cGAS to enhance innate immune response. Mechanistically, strengthens the processes of cGAS binding with dsDNA and assembling oligomers and also accelerates and stabilizes cGAS-DNA condensation, thereby enhancing production of antiviral IFNs and inflammatory cytokines. This chain is Protein zyg-11 homolog B, found in Homo sapiens (Human).